Reading from the N-terminus, the 95-residue chain is Ribonuclease P protein component 1 (95 aa).

Belongs to the eukaryotic/archaeal RNase P protein component 1 family. In terms of assembly, consists of a catalytic RNA component and at least 4 protein subunits. Forms a subcomplex with Rnp4 which stimulates the catalytic RNA.

It is found in the cytoplasm. The enzyme catalyses Endonucleolytic cleavage of RNA, removing 5'-extranucleotides from tRNA precursor.. Its function is as follows. Part of ribonuclease P, a protein complex that generates mature tRNA molecules by cleaving their 5'-ends. The sequence is that of Ribonuclease P protein component 1 from Methanocaldococcus jannaschii (strain ATCC 43067 / DSM 2661 / JAL-1 / JCM 10045 / NBRC 100440) (Methanococcus jannaschii).